The sequence spans 135 residues: Ribosome-binding factor A (135 aa).

This sequence belongs to the RbfA family. As to quaternary structure, monomer. Binds 30S ribosomal subunits, but not 50S ribosomal subunits or 70S ribosomes.

It is found in the cytoplasm. One of several proteins that assist in the late maturation steps of the functional core of the 30S ribosomal subunit. Associates with free 30S ribosomal subunits (but not with 30S subunits that are part of 70S ribosomes or polysomes). Required for efficient processing of 16S rRNA. May interact with the 5'-terminal helix region of 16S rRNA. The protein is Ribosome-binding factor A of Bartonella henselae (strain ATCC 49882 / DSM 28221 / CCUG 30454 / Houston 1) (Rochalimaea henselae).